Reading from the N-terminus, the 77-residue chain is Large ribosomal subunit protein bL28 (77 aa).

This sequence belongs to the bacterial ribosomal protein bL28 family.

This chain is Large ribosomal subunit protein bL28, found in Dechloromonas aromatica (strain RCB).